The chain runs to 425 residues: 3-isopropylmalate dehydratase large subunit (425 aa).

Residues cysteine 306, cysteine 366, and cysteine 369 each coordinate [4Fe-4S] cluster.

It belongs to the aconitase/IPM isomerase family. LeuC type 2 subfamily. In terms of assembly, heterodimer of LeuC and LeuD. Requires [4Fe-4S] cluster as cofactor.

It carries out the reaction (2R,3S)-3-isopropylmalate = (2S)-2-isopropylmalate. It functions in the pathway amino-acid biosynthesis; L-leucine biosynthesis; L-leucine from 3-methyl-2-oxobutanoate: step 2/4. Its function is as follows. Catalyzes the isomerization between 2-isopropylmalate and 3-isopropylmalate, via the formation of 2-isopropylmaleate. The sequence is that of 3-isopropylmalate dehydratase large subunit from Nautilia profundicola (strain ATCC BAA-1463 / DSM 18972 / AmH).